The primary structure comprises 119 residues: Immunoglobulin heavy variable 2-70 (119 aa).

The N-terminal stretch at 1 to 19 (MDILCSTLLLLTVPSWVLS) is a signal peptide. Gln-20 carries the pyrrolidone carboxylic acid modification. Positions 20–44 (QVTLRESGPALVKPTQTLTLTCTFS) are framework-1. In terms of domain architecture, Ig-like spans 20–119 (QVTLRESGPA…DTATYYCARI (100 aa)). Cys-41 and Cys-116 form a disulfide bridge. The segment at 45-54 (GFSLSTSGMC) is complementarity-determining-1. The interval 55 to 71 (VSWIRQPPGKALEWLAL) is framework-2. Positions 72 to 78 (IDWDDDK) are complementarity-determining-2. The segment at 79-116 (YYSTSLKTRLTISKDTSKNQVVLTMTNMDPVDTATYYC) is framework-3. The interval 117–119 (ARI) is complementarity-determining-3.

As to quaternary structure, immunoglobulins are composed of two identical heavy chains and two identical light chains; disulfide-linked.

The protein resides in the secreted. It is found in the cell membrane. Its function is as follows. V region of the variable domain of immunoglobulin heavy chains that participates in the antigen recognition. Immunoglobulins, also known as antibodies, are membrane-bound or secreted glycoproteins produced by B lymphocytes. In the recognition phase of humoral immunity, the membrane-bound immunoglobulins serve as receptors which, upon binding of a specific antigen, trigger the clonal expansion and differentiation of B lymphocytes into immunoglobulins-secreting plasma cells. Secreted immunoglobulins mediate the effector phase of humoral immunity, which results in the elimination of bound antigens. The antigen binding site is formed by the variable domain of one heavy chain, together with that of its associated light chain. Thus, each immunoglobulin has two antigen binding sites with remarkable affinity for a particular antigen. The variable domains are assembled by a process called V-(D)-J rearrangement and can then be subjected to somatic hypermutations which, after exposure to antigen and selection, allow affinity maturation for a particular antigen. This is Immunoglobulin heavy variable 2-70 from Homo sapiens (Human).